The chain runs to 324 residues: D-alanine--D-alanine ligase (324 aa).

Residues 121 to 321 (NQYLKAFGVR…IKDVMTDIIE (201 aa)) form the ATP-grasp domain. 149–204 (VEKIGLPCFIKPNLGGSSFGVTKVKTREQIQPAIAKAFSEAEEVMIEAFMGGTELT) is a binding site for ATP. Mg(2+) contacts are provided by aspartate 275, glutamate 288, and asparagine 290.

The protein belongs to the D-alanine--D-alanine ligase family. Mg(2+) is required as a cofactor. Requires Mn(2+) as cofactor.

The protein localises to the cytoplasm. The enzyme catalyses 2 D-alanine + ATP = D-alanyl-D-alanine + ADP + phosphate + H(+). The protein operates within cell wall biogenesis; peptidoglycan biosynthesis. Its function is as follows. Cell wall formation. In Bacteroides fragilis (strain ATCC 25285 / DSM 2151 / CCUG 4856 / JCM 11019 / LMG 10263 / NCTC 9343 / Onslow / VPI 2553 / EN-2), this protein is D-alanine--D-alanine ligase.